The primary structure comprises 63 residues: Bowman-Birk type proteinase inhibitor (63 aa).

7 disulfide bridges follow: Cys7/Cys60, Cys8/Cys23, Cys11/Cys56, Cys13/Cys21, Cys30/Cys37, Cys34/Cys49, and Cys39/Cys47.

As to quaternary structure, monomer.

Its function is as follows. Inhibits trypsin stoichiometrically at the molar ratio of 1:2, with a dissociation constant of 4.2 nM. Does not inhibit chymotrypsin. The polypeptide is Bowman-Birk type proteinase inhibitor (Lupinus albus (White lupine)).